Consider the following 209-residue polypeptide: uncharacterized protein (209 aa).

The disordered stretch occupies residues 177–209 (DNSDNSSDSDDSDSLDGSDDLNDSDNVDNLFVG). A compositionally biased stretch (acidic residues) spans 183 to 202 (SDSDDSDSLDGSDDLNDSDN).

This is an uncharacterized protein from Acanthamoeba polyphaga (Amoeba).